The sequence spans 611 residues: DNA-directed RNA polymerase subunit Rpo2C (611 aa).

Cysteine 547, cysteine 550, cysteine 565, and cysteine 568 together coordinate Zn(2+).

Belongs to the RNA polymerase beta chain family. As to quaternary structure, part of the RNA polymerase complex. Zn(2+) is required as a cofactor.

Its subcellular location is the cytoplasm. The enzyme catalyses RNA(n) + a ribonucleoside 5'-triphosphate = RNA(n+1) + diphosphate. Its function is as follows. DNA-dependent RNA polymerase (RNAP) catalyzes the transcription of DNA into RNA using the four ribonucleoside triphosphates as substrates. The Rpo2 subunit (Rpo2N and Rpo2C in this organism) is implicated in DNA promoter recognition and in nucleotide binding. The sequence is that of DNA-directed RNA polymerase subunit Rpo2C from Methanococcus vannielii (strain ATCC 35089 / DSM 1224 / JCM 13029 / OCM 148 / SB).